The following is a 228-amino-acid chain: Large ribosomal subunit protein bL25 (228 aa).

The segment at 198–228 is disordered; it reads AAIAEAQSAEAAEEKAEAEAEATNEKNDTEE. Residues 209 to 228 are compositionally biased toward basic and acidic residues; sequence AEEKAEAEAEATNEKNDTEE.

Belongs to the bacterial ribosomal protein bL25 family. CTC subfamily. Part of the 50S ribosomal subunit; part of the 5S rRNA/L5/L18/L25 subcomplex. Contacts the 5S rRNA. Binds to the 5S rRNA independently of L5 and L18.

Its function is as follows. This is one of the proteins that binds to the 5S RNA in the ribosome where it forms part of the central protuberance. In Methylorubrum populi (strain ATCC BAA-705 / NCIMB 13946 / BJ001) (Methylobacterium populi), this protein is Large ribosomal subunit protein bL25.